The sequence spans 180 residues: Alkyl hydroperoxide reductase AhpD (180 aa).

The Proton donor role is filled by C131. A disulfide bridge connects residues C131 and C134. C134 (cysteine sulfenic acid (-SOH) intermediate) is an active-site residue.

Belongs to the AhpD family.

It carries out the reaction N(6)-[(R)-dihydrolipoyl]-L-lysyl-[lipoyl-carrier protein] + a hydroperoxide = N(6)-[(R)-lipoyl]-L-lysyl-[lipoyl-carrier protein] + an alcohol + H2O. Its function is as follows. Antioxidant protein with alkyl hydroperoxidase activity. Required for the reduction of the AhpC active site cysteine residues and for the regeneration of the AhpC enzyme activity. This Hyphomonas neptunium (strain ATCC 15444) protein is Alkyl hydroperoxide reductase AhpD.